The following is a 1887-amino-acid chain: ATP-dependent DNA helicase tlh1 (1887 aa).

The span at asparagine 329 to aspartate 347 shows a compositional bias: basic and acidic residues. Disordered stretches follow at residues asparagine 329–glutamate 372, glutamate 504–aspartate 552, and methionine 1110–glutamine 1135. Acidic residues-rich tracts occupy residues leucine 360–glutamate 372 and serine 524–asparagine 533. The segment covering asparagine 540 to asparagine 549 has biased composition (low complexity). Basic and acidic residues predominate over residues glutamate 1112–alanine 1131. The Helicase ATP-binding domain maps to tyrosine 1200–valine 1375. Residues leucine 1213–serine 1220 and methionine 1240–leucine 1247 each bind ATP. The DEAH box signature appears at aspartate 1322–histidine 1325. The Helicase C-terminal domain occupies aspartate 1401–methionine 1559. The interval tyrosine 1613–proline 1643 is disordered. A compositionally biased stretch (low complexity) spans glycine 1626–threonine 1642. A CCHC-type zinc finger spans residues serine 1804 to leucine 1821.

The protein belongs to the helicase family. RecQ subfamily.

It carries out the reaction Couples ATP hydrolysis with the unwinding of duplex DNA by translocating in the 3'-5' direction.. The catalysed reaction is ATP + H2O = ADP + phosphate + H(+). Functionally, a probable ATP-dependent 3'-5' DNA helicase. Has a role in telomerase-independent telomere maintenance. The polypeptide is ATP-dependent DNA helicase tlh1 (Schizosaccharomyces pombe (strain 972 / ATCC 24843) (Fission yeast)).